Consider the following 341-residue polypeptide: Phenylalanine--tRNA ligase alpha subunit (341 aa).

Residue E254 coordinates Mg(2+).

The protein belongs to the class-II aminoacyl-tRNA synthetase family. Phe-tRNA synthetase alpha subunit type 1 subfamily. As to quaternary structure, tetramer of two alpha and two beta subunits. Requires Mg(2+) as cofactor.

The protein resides in the cytoplasm. The catalysed reaction is tRNA(Phe) + L-phenylalanine + ATP = L-phenylalanyl-tRNA(Phe) + AMP + diphosphate + H(+). In Mycoplasma pneumoniae (strain ATCC 29342 / M129 / Subtype 1) (Mycoplasmoides pneumoniae), this protein is Phenylalanine--tRNA ligase alpha subunit (pheS).